Here is a 154-residue protein sequence, read N- to C-terminus: 6,7-dimethyl-8-ribityllumazine synthase (154 aa).

Residues Phe-22, 56–58 (AFE), and 80–82 (AVI) each bind 5-amino-6-(D-ribitylamino)uracil. Residue 85–86 (AT) participates in (2S)-2-hydroxy-3-oxobutyl phosphate binding. The active-site Proton donor is the His-88. Residue Phe-113 coordinates 5-amino-6-(D-ribitylamino)uracil. (2S)-2-hydroxy-3-oxobutyl phosphate is bound at residue Arg-127.

Belongs to the DMRL synthase family. Forms an icosahedral capsid composed of 60 subunits, arranged as a dodecamer of pentamers.

The catalysed reaction is (2S)-2-hydroxy-3-oxobutyl phosphate + 5-amino-6-(D-ribitylamino)uracil = 6,7-dimethyl-8-(1-D-ribityl)lumazine + phosphate + 2 H2O + H(+). It participates in cofactor biosynthesis; riboflavin biosynthesis; riboflavin from 2-hydroxy-3-oxobutyl phosphate and 5-amino-6-(D-ribitylamino)uracil: step 1/2. Its function is as follows. Catalyzes the formation of 6,7-dimethyl-8-ribityllumazine by condensation of 5-amino-6-(D-ribitylamino)uracil with 3,4-dihydroxy-2-butanone 4-phosphate. This is the penultimate step in the biosynthesis of riboflavin. The protein is 6,7-dimethyl-8-ribityllumazine synthase of Geobacillus thermodenitrificans (strain NG80-2).